Here is a 148-residue protein sequence, read N- to C-terminus: Sec-independent protein translocase protein TatB (148 aa).

The helical transmembrane segment at 2 to 22 (FNDIGPLELVTLVVLAVLVFG) threads the bilayer. Composition is skewed to basic and acidic residues over residues 100-110 (VTDAVHGRESE) and 128-148 (MTKK…ADAT). The disordered stretch occupies residues 100 to 148 (VTDAVHGRESETSASSSSANGSAGGTVDMTKKREQLEADERPPFDADAT).

Belongs to the TatB family. In terms of assembly, the Tat system comprises two distinct complexes: a TatABC complex, containing multiple copies of TatA, TatB and TatC subunits, and a separate TatA complex, containing only TatA subunits. Substrates initially bind to the TatABC complex, which probably triggers association of the separate TatA complex to form the active translocon.

It localises to the cell membrane. Functionally, part of the twin-arginine translocation (Tat) system that transports large folded proteins containing a characteristic twin-arginine motif in their signal peptide across membranes. Together with TatC, TatB is part of a receptor directly interacting with Tat signal peptides. TatB may form an oligomeric binding site that transiently accommodates folded Tat precursor proteins before their translocation. The chain is Sec-independent protein translocase protein TatB from Streptomyces avermitilis (strain ATCC 31267 / DSM 46492 / JCM 5070 / NBRC 14893 / NCIMB 12804 / NRRL 8165 / MA-4680).